We begin with the raw amino-acid sequence, 785 residues long: Endonuclease MutS2 (785 aa).

Residue 335–342 (GPNTGGKT) coordinates ATP. One can recognise a Smr domain in the interval 710–785 (LDLRGERYEE…GLGNTVVELR (76 aa)). The tract at residues 764–785 (VKSARDGGANEGGLGNTVVELR) is disordered.

Belongs to the DNA mismatch repair MutS family. MutS2 subfamily. In terms of assembly, homodimer. Binds to stalled ribosomes, contacting rRNA.

Functionally, endonuclease that is involved in the suppression of homologous recombination and thus may have a key role in the control of bacterial genetic diversity. Its function is as follows. Acts as a ribosome collision sensor, splitting the ribosome into its 2 subunits. Detects stalled/collided 70S ribosomes which it binds and splits by an ATP-hydrolysis driven conformational change. Acts upstream of the ribosome quality control system (RQC), a ribosome-associated complex that mediates the extraction of incompletely synthesized nascent chains from stalled ribosomes and their subsequent degradation. Probably generates substrates for RQC. The sequence is that of Endonuclease MutS2 from Halalkalibacterium halodurans (strain ATCC BAA-125 / DSM 18197 / FERM 7344 / JCM 9153 / C-125) (Bacillus halodurans).